A 105-amino-acid polypeptide reads, in one-letter code: MGKLTLLLLVLLGWLQYSLWLGKNGVHDLVRVESDVAAQQSNNAQLKARNDQLFAEIDDLNGGQGAIEERSRNELGMIKPGETFYRLVPEQSKRQPAAPATQDNQ.

Over 1-3 (MGK) the chain is Cytoplasmic. The chain crosses the membrane as a helical span at residues 4–21 (LTLLLLVLLGWLQYSLWL). Residues 22–105 (GKNGVHDLVR…PAAPATQDNQ (84 aa)) are Periplasmic-facing. A coiled-coil region spans residues 28–62 (DLVRVESDVAAQQSNNAQLKARNDQLFAEIDDLNG).

Belongs to the FtsB family. In terms of assembly, part of a complex composed of FtsB, FtsL and FtsQ.

The protein resides in the cell inner membrane. Its function is as follows. Essential cell division protein. May link together the upstream cell division proteins, which are predominantly cytoplasmic, with the downstream cell division proteins, which are predominantly periplasmic. This Sodalis glossinidius (strain morsitans) protein is Cell division protein FtsB.